The following is a 343-amino-acid chain: Protein RecA (343 aa).

68-75 (GPESSGKT) lines the ATP pocket.

This sequence belongs to the RecA family.

It localises to the cytoplasm. In terms of biological role, can catalyze the hydrolysis of ATP in the presence of single-stranded DNA, the ATP-dependent uptake of single-stranded DNA by duplex DNA, and the ATP-dependent hybridization of homologous single-stranded DNAs. It interacts with LexA causing its activation and leading to its autocatalytic cleavage. The polypeptide is Protein RecA (Syntrophobacter fumaroxidans (strain DSM 10017 / MPOB)).